The following is a 166-amino-acid chain: Interferon gamma (166 aa).

Residues 1–23 (MKYTSYFLALLLCVLLGFSGSYG) form the signal peptide. Q24 bears the Pyrrolidone carboxylic acid mark. N-linked (GlcNAc...) asparagine glycosylation is found at N39 and N106.

Belongs to the type II (or gamma) interferon family. As to quaternary structure, homodimer. Interacts with IFNGR1 (via extracellular domain); this interaction promotes IFNGR1 dimerization. In terms of tissue distribution, released primarily from activated T lymphocytes.

Its subcellular location is the secreted. Type II interferon produced by immune cells such as T-cells and NK cells that plays crucial roles in antimicrobial, antiviral, and antitumor responses by activating effector immune cells and enhancing antigen presentation. Primarily signals through the JAK-STAT pathway after interaction with its receptor IFNGR1 to affect gene regulation. Upon IFNG binding, IFNGR1 intracellular domain opens out to allow association of downstream signaling components JAK2, JAK1 and STAT1, leading to STAT1 activation, nuclear translocation and transcription of IFNG-regulated genes. Many of the induced genes are transcription factors such as IRF1 that are able to further drive regulation of a next wave of transcription. Plays a role in class I antigen presentation pathway by inducing a replacement of catalytic proteasome subunits with immunoproteasome subunits. In turn, increases the quantity, quality, and repertoire of peptides for class I MHC loading. Increases the efficiency of peptide generation also by inducing the expression of activator PA28 that associates with the proteasome and alters its proteolytic cleavage preference. Up-regulates as well MHC II complexes on the cell surface by promoting expression of several key molecules such as cathepsins B/CTSB, H/CTSH, and L/CTSL. Participates in the regulation of hematopoietic stem cells during development and under homeostatic conditions by affecting their development, quiescence, and differentiation. In Bubalus bubalis (Domestic water buffalo), this protein is Interferon gamma (IFNG).